A 754-amino-acid chain; its full sequence is MTILTHTLGFPRVGLRRELKKAQESYWAGNTTREALLAVGRELRARHWEQQKQAGIDLLPVGDFAWYDHVLTTSLLLGNVPARHQNNDGSVDIDTLFRIGRGRAPTGEPAAAAEMTKWFNTNYHYIVPEFSKGQQFRLTWTQLLEEVDEALALGHKIKPVLLGPVTYLWLGKVKGEPFDRLTLLKDILPVYQHVLAELAKRGIEWVQIDEPALVLELPQAWLDAFKPAYDALAGQVKLLLTTYFEGVTPNLDTIIALPVQGLHVDLIHGKDDVAELHQRLPVDWLLSAGLINGRNVWRADLTEKYAQINAIVGKRALWVASSCSLLHSPIDLSVETRLDTEVKSWFAFALQKCGELALLRDALNSGETAALEEWSAPIQARRHSRRVHNAAVEKRLAAITAQDSQRENPYEVRAEAQRARFKLPAWPTTTIGSFPQTTEIRGLRLDFKKGNLDANHYRTGIAEHIKQAIIEQERLGLDVLVHGEAERNDMVEYFGEHLDGFVFTQNGWVQSYGSRCVKPPVVIGDISRPAPITVEWAKYAQSLTDKPVKGMLTGPVTILCWSFPREDVTRETIAKQIALALRDEVADLEAAGIGIIQIDEPALREGLPLRRSDWDAYLEWGVEAFRINAAVAKDETQIHTHMCYCEFNDIMDSIAALDADVITIETSRSDMELLESFEAFDYPNEIGPGVYDIHSPNVPSVEWIEALLKKAAQRIPAQRLWVNPDCGLKTRGWPETRAALANMVKAAHNLRQAK.

5-methyltetrahydropteroyltri-L-glutamate contacts are provided by residues 17–20 (RELK) and Lys117. L-homocysteine-binding positions include 431 to 433 (IGS) and Glu484. L-methionine contacts are provided by residues 431–433 (IGS) and Glu484. Residues 515 to 516 (RC) and Trp561 each bind 5-methyltetrahydropteroyltri-L-glutamate. L-homocysteine is bound at residue Asp599. Asp599 contributes to the L-methionine binding site. Glu605 contributes to the 5-methyltetrahydropteroyltri-L-glutamate binding site. Zn(2+) is bound by residues His641, Cys643, and Glu665. The active-site Proton donor is His694. Cys726 contributes to the Zn(2+) binding site.

The protein belongs to the vitamin-B12 independent methionine synthase family. Zn(2+) serves as cofactor.

It catalyses the reaction 5-methyltetrahydropteroyltri-L-glutamate + L-homocysteine = tetrahydropteroyltri-L-glutamate + L-methionine. It functions in the pathway amino-acid biosynthesis; L-methionine biosynthesis via de novo pathway; L-methionine from L-homocysteine (MetE route): step 1/1. In terms of biological role, catalyzes the transfer of a methyl group from 5-methyltetrahydrofolate to homocysteine resulting in methionine formation. This Salmonella typhimurium (strain LT2 / SGSC1412 / ATCC 700720) protein is 5-methyltetrahydropteroyltriglutamate--homocysteine methyltransferase.